Reading from the N-terminus, the 559-residue chain is 2,3-bisphosphoglycerate-independent phosphoglycerate mutase (559 aa).

2 residues coordinate Mn(2+): Asp-28 and Ser-81. Residue Ser-81 is the Phosphoserine intermediate of the active site. Substrate contacts are provided by residues His-140, 170–171 (RD), Arg-206, Arg-213, 286–289 (RADR), and Lys-361. The Mn(2+) site is built by Asp-430, His-434, Asp-471, His-472, and His-501.

The protein belongs to the BPG-independent phosphoglycerate mutase family. In terms of assembly, monomer. The cofactor is Mn(2+). As to expression, found ubiquitously in germinating seed.

It localises to the cytoplasm. It catalyses the reaction (2R)-2-phosphoglycerate = (2R)-3-phosphoglycerate. Its pathway is carbohydrate degradation; glycolysis; pyruvate from D-glyceraldehyde 3-phosphate: step 3/5. In terms of biological role, catalyzes the interconversion of 2-phosphoglycerate and 3-phosphoglycerate. This Nicotiana tabacum (Common tobacco) protein is 2,3-bisphosphoglycerate-independent phosphoglycerate mutase.